We begin with the raw amino-acid sequence, 276 residues long: Hydroxyethylthiazole kinase (276 aa).

ATP is bound by residues arginine 126 and serine 172. Residue glycine 199 participates in substrate binding.

It belongs to the Thz kinase family. The cofactor is Mg(2+).

It carries out the reaction 5-(2-hydroxyethyl)-4-methylthiazole + ATP = 4-methyl-5-(2-phosphooxyethyl)-thiazole + ADP + H(+). It functions in the pathway cofactor biosynthesis; thiamine diphosphate biosynthesis; 4-methyl-5-(2-phosphoethyl)-thiazole from 5-(2-hydroxyethyl)-4-methylthiazole: step 1/1. In terms of biological role, catalyzes the phosphorylation of the hydroxyl group of 4-methyl-5-beta-hydroxyethylthiazole (THZ). This chain is Hydroxyethylthiazole kinase, found in Burkholderia pseudomallei (strain 1106a).